Reading from the N-terminus, the 110-residue chain is Large ribosomal subunit protein uL22 (110 aa).

The protein belongs to the universal ribosomal protein uL22 family. In terms of assembly, part of the 50S ribosomal subunit.

In terms of biological role, this protein binds specifically to 23S rRNA; its binding is stimulated by other ribosomal proteins, e.g. L4, L17, and L20. It is important during the early stages of 50S assembly. It makes multiple contacts with different domains of the 23S rRNA in the assembled 50S subunit and ribosome. Its function is as follows. The globular domain of the protein is located near the polypeptide exit tunnel on the outside of the subunit, while an extended beta-hairpin is found that lines the wall of the exit tunnel in the center of the 70S ribosome. The polypeptide is Large ribosomal subunit protein uL22 (Paraburkholderia phytofirmans (strain DSM 17436 / LMG 22146 / PsJN) (Burkholderia phytofirmans)).